Here is a 222-residue protein sequence, read N- to C-terminus: Apoptosis regulator OPG045 (222 aa).

Belongs to the orthopoxvirus OPG045 family. As to quaternary structure, homodimer. Interacts with host pro-apoptotic protein BCL2L11 (via BH3 domain). Interacts with host NLRP1. Interacts with host BAK.

It is found in the host mitochondrion outer membrane. The protein localises to the host cytoplasm. In terms of biological role, plays a role in evading host innate immune response by inhibiting host inflammasome activation. Interacts with and inhibits NLR-mediated interleukin-1 beta/IL1B production in infected cells. At the host mitochondria outer membrane, interacts with the BH3 domain of host BAK and prevents BAK from binding active BAX. In turn, host apoptosis is inhibited. In Homo sapiens (Human), this protein is Apoptosis regulator OPG045 (OPG045).